Reading from the N-terminus, the 229-residue chain is Protein AF_2251 (229 aa).

The protein belongs to the CinA family.

The sequence is that of Protein AF_2251 from Archaeoglobus fulgidus (strain ATCC 49558 / DSM 4304 / JCM 9628 / NBRC 100126 / VC-16).